The primary structure comprises 280 residues: Hydroxyethylthiazole kinase (280 aa).

Substrate is bound at residue M50. Residues K125 and T178 each coordinate ATP. G205 contacts substrate.

Belongs to the Thz kinase family. It depends on Mg(2+) as a cofactor.

It catalyses the reaction 5-(2-hydroxyethyl)-4-methylthiazole + ATP = 4-methyl-5-(2-phosphooxyethyl)-thiazole + ADP + H(+). It functions in the pathway cofactor biosynthesis; thiamine diphosphate biosynthesis; 4-methyl-5-(2-phosphoethyl)-thiazole from 5-(2-hydroxyethyl)-4-methylthiazole: step 1/1. In terms of biological role, catalyzes the phosphorylation of the hydroxyl group of 4-methyl-5-beta-hydroxyethylthiazole (THZ). This is Hydroxyethylthiazole kinase from Lacticaseibacillus casei (strain BL23) (Lactobacillus casei).